Consider the following 212-residue polypeptide: External core antigen (212 aa).

An N-terminal signal peptide occupies residues 1 to 19 (MQLFHLCLIISCSCPTVQA). The interval 25 to 27 (GWL) is HBEAG. Residues 165 to 212 (NAPILSTLPETTVVRRRGRSPRRRTPSPRRRRSQSPRRRRSQSPASQC) are disordered. The span at 178-205 (VRRRGRSPRRRTPSPRRRRSQSPRRRRS) shows a compositional bias: basic residues. A 1; half-length repeat occupies 184 to 190 (SPRRRTP). A 3 X 8 AA repeats of S-P-R-R-R-R-S-Q region spans residues 184 to 206 (SPRRRTPSPRRRRSQSPRRRRSQ). The propeptide occupies 184-212 (SPRRRTPSPRRRRSQSPRRRRSQSPASQC). A run of 2 repeats spans residues 191-198 (SPRRRRSQ) and 199-206 (SPRRRRSQ).

The protein belongs to the orthohepadnavirus precore antigen family. As to quaternary structure, homodimerizes. In terms of processing, phosphorylated. Post-translationally, cleaved by host furin.

It is found in the secreted. The protein resides in the host nucleus. May regulate immune response to the intracellular capsid in acting as a T-cell tolerogen, by having an immunoregulatory effect which prevents destruction of infected cells by cytotoxic T-cells. This immune regulation may predispose to chronicity during perinatal infections and prevent severe liver injury during adult infections. The sequence is that of External core antigen from Hepatitis B virus genotype F2 subtype adw4q (isolate Senegal/9203) (HBV-F).